We begin with the raw amino-acid sequence, 473 residues long: Photosystem II CP43 reaction center protein (473 aa).

Residues 1–14 (MKTLYSLRRFYPVE) constitute a propeptide that is removed on maturation. At threonine 15 the chain carries N-acetylthreonine. Phosphothreonine is present on threonine 15. 5 helical membrane passes run 69–93 (LFEV…PHLA), 134–155 (LLGP…KDRN), 178–200 (KALY…RKIT), 255–275 (KPFA…LSYS), and 291–312 (WFNN…ASQA). Glutamate 367 provides a ligand contact to [CaMn4O5] cluster. A helical transmembrane segment spans residues 447-471 (RARAAAAGFEKGIDRDFEPVLSMTP).

The protein belongs to the PsbB/PsbC family. PsbC subfamily. As to quaternary structure, PSII is composed of 1 copy each of membrane proteins PsbA, PsbB, PsbC, PsbD, PsbE, PsbF, PsbH, PsbI, PsbJ, PsbK, PsbL, PsbM, PsbT, PsbX, PsbY, PsbZ, Psb30/Ycf12, at least 3 peripheral proteins of the oxygen-evolving complex and a large number of cofactors. It forms dimeric complexes. Binds multiple chlorophylls and provides some of the ligands for the Ca-4Mn-5O cluster of the oxygen-evolving complex. It may also provide a ligand for a Cl- that is required for oxygen evolution. PSII binds additional chlorophylls, carotenoids and specific lipids. is required as a cofactor.

The protein resides in the plastid. It is found in the chloroplast thylakoid membrane. Functionally, one of the components of the core complex of photosystem II (PSII). It binds chlorophyll and helps catalyze the primary light-induced photochemical processes of PSII. PSII is a light-driven water:plastoquinone oxidoreductase, using light energy to abstract electrons from H(2)O, generating O(2) and a proton gradient subsequently used for ATP formation. This is Photosystem II CP43 reaction center protein from Helianthus annuus (Common sunflower).